Reading from the N-terminus, the 296-residue chain is 4-hydroxy-tetrahydrodipicolinate synthase (296 aa).

Thr47 lines the pyruvate pocket. Tyr135 (proton donor/acceptor) is an active-site residue. Lys163 functions as the Schiff-base intermediate with substrate in the catalytic mechanism. Ile205 contacts pyruvate.

This sequence belongs to the DapA family. In terms of assembly, homotetramer; dimer of dimers.

It is found in the cytoplasm. The enzyme catalyses L-aspartate 4-semialdehyde + pyruvate = (2S,4S)-4-hydroxy-2,3,4,5-tetrahydrodipicolinate + H2O + H(+). Its pathway is amino-acid biosynthesis; L-lysine biosynthesis via DAP pathway; (S)-tetrahydrodipicolinate from L-aspartate: step 3/4. In terms of biological role, catalyzes the condensation of (S)-aspartate-beta-semialdehyde [(S)-ASA] and pyruvate to 4-hydroxy-tetrahydrodipicolinate (HTPA). This chain is 4-hydroxy-tetrahydrodipicolinate synthase, found in Macrococcus caseolyticus (strain JCSC5402) (Macrococcoides caseolyticum).